The following is a 486-amino-acid chain: Phosphomethylpyrimidine synthase (486 aa).

Substrate is bound by residues Asn-80, Met-109, Tyr-139, His-175, 195–197 (SRG), 236–239 (DSLR), and Glu-275. Residue His-279 participates in Zn(2+) binding. Tyr-329 is a binding site for substrate. Position 370 (His-370) interacts with Zn(2+). Cys-450, Cys-453, and Cys-458 together coordinate [4Fe-4S] cluster.

The protein belongs to the ThiC family. [4Fe-4S] cluster serves as cofactor.

It carries out the reaction 5-amino-1-(5-phospho-beta-D-ribosyl)imidazole + S-adenosyl-L-methionine = 4-amino-2-methyl-5-(phosphooxymethyl)pyrimidine + CO + 5'-deoxyadenosine + formate + L-methionine + 3 H(+). Its pathway is cofactor biosynthesis; thiamine diphosphate biosynthesis. Its function is as follows. Catalyzes the synthesis of the hydroxymethylpyrimidine phosphate (HMP-P) moiety of thiamine from aminoimidazole ribotide (AIR) in a radical S-adenosyl-L-methionine (SAM)-dependent reaction. This chain is Phosphomethylpyrimidine synthase, found in Trichodesmium erythraeum (strain IMS101).